Consider the following 68-residue polypeptide: Purkinje cell protein 4-like protein 1 (68 aa).

A compositionally biased stretch (polar residues) spans 1–16 (MSELNTKTPPAANQAS). The tract at residues 1 to 42 (MSELNTKTPPAANQASDPEEKGKPGSIKKAEEEEEIDIDLTA) is disordered. Thr-8 carries the phosphothreonine modification. The span at 18–31 (PEEKGKPGSIKKAE) shows a compositional bias: basic and acidic residues. Residues 45–68 (TEKAALAIQGKFRRFQKRKKDSSS) enclose the IQ domain.

This sequence belongs to the PCP4 family. Expressed in laminar and nuclear structures of the CNS.

This Mus musculus (Mouse) protein is Purkinje cell protein 4-like protein 1 (Pcp4l1).